The following is a 367-amino-acid chain: Phosphoribosylaminoimidazole-succinocarboxamide synthase (367 aa).

It belongs to the SAICAR synthetase family.

The enzyme catalyses 5-amino-1-(5-phospho-D-ribosyl)imidazole-4-carboxylate + L-aspartate + ATP = (2S)-2-[5-amino-1-(5-phospho-beta-D-ribosyl)imidazole-4-carboxamido]succinate + ADP + phosphate + 2 H(+). Its pathway is purine metabolism; IMP biosynthesis via de novo pathway; 5-amino-1-(5-phospho-D-ribosyl)imidazole-4-carboxamide from 5-amino-1-(5-phospho-D-ribosyl)imidazole-4-carboxylate: step 1/2. The chain is Phosphoribosylaminoimidazole-succinocarboxamide synthase from Aliivibrio fischeri (strain ATCC 700601 / ES114) (Vibrio fischeri).